The sequence spans 187 residues: Peptide deformylase (187 aa).

2 residues coordinate Fe cation: cysteine 96 and histidine 138. Glutamate 139 is a catalytic residue. Histidine 142 lines the Fe cation pocket.

It belongs to the polypeptide deformylase family. Fe(2+) serves as cofactor.

It carries out the reaction N-terminal N-formyl-L-methionyl-[peptide] + H2O = N-terminal L-methionyl-[peptide] + formate. Functionally, removes the formyl group from the N-terminal Met of newly synthesized proteins. Requires at least a dipeptide for an efficient rate of reaction. N-terminal L-methionine is a prerequisite for activity but the enzyme has broad specificity at other positions. This is Peptide deformylase from Brachyspira hyodysenteriae (strain ATCC 49526 / WA1).